A 576-amino-acid polypeptide reads, in one-letter code: Glutamine--tRNA ligase (576 aa).

The 'HIGH' region signature appears at 47 to 57 (PEPNGYLHIGH). ATP is bound by residues 48–50 (EPN) and 54–60 (HIGHAKS). 2 residues coordinate L-glutamine: aspartate 80 and tyrosine 229. ATP-binding positions include threonine 248 and 283-284 (RL). The 'KMSKS' region signature appears at 290 to 294 (ITSKR).

Belongs to the class-I aminoacyl-tRNA synthetase family. As to quaternary structure, monomer.

The protein localises to the cytoplasm. It carries out the reaction tRNA(Gln) + L-glutamine + ATP = L-glutaminyl-tRNA(Gln) + AMP + diphosphate. The polypeptide is Glutamine--tRNA ligase (Ralstonia pickettii (strain 12J)).